We begin with the raw amino-acid sequence, 306 residues long: Agmatinase (306 aa).

Mn(2+) contacts are provided by His126, Asp149, His151, Asp153, Asp230, and Asp232.

The protein belongs to the arginase family. Agmatinase subfamily. Mn(2+) is required as a cofactor.

The catalysed reaction is agmatine + H2O = urea + putrescine. The protein operates within amine and polyamine biosynthesis; putrescine biosynthesis via agmatine pathway; putrescine from agmatine: step 1/1. Functionally, catalyzes the formation of putrescine from agmatine. The chain is Agmatinase from Shigella sonnei (strain Ss046).